Consider the following 384-residue polypeptide: Beta-ureidopropionase (384 aa).

Residues 72-344 (VHVGLVQNRI…DGLLVAKLDL (273 aa)) enclose the CN hydrolase domain. Residue E119 is the Proton acceptor of the active site. K196 (proton donor) is an active-site residue. C233 acts as the Nucleophile in catalysis. Phosphoserine is present on S378.

This sequence belongs to the carbon-nitrogen hydrolase superfamily. BUP family. In terms of assembly, homodimer, homotetramer, homooctamer; can also form higher homooligomers.

It localises to the cytoplasm. It catalyses the reaction 3-(carbamoylamino)propanoate + H2O + 2 H(+) = beta-alanine + NH4(+) + CO2. The enzyme catalyses 3-(carbamoylamino)-2-methylpropanoate + H2O + 2 H(+) = (R)-3-amino-2-methylpropanoate + NH4(+) + CO2. Its pathway is amino-acid biosynthesis; beta-alanine biosynthesis. In terms of biological role, catalyzes a late step in pyrimidine degradation. Converts N-carbamoyl-beta-alanine (3-ureidopropanoate) into beta-alanine, ammonia and carbon dioxide. Likewise, converts N-carbamoyl-beta-aminoisobutyrate (3-ureidoisobutyrate) into beta-aminoisobutyrate, ammonia and carbon dioxide. The chain is Beta-ureidopropionase (UPB1) from Pongo abelii (Sumatran orangutan).